The primary structure comprises 351 residues: MASITLDNLVKAYGDTEVLHHVAGQIEDGEFIVIVGPSGCGKSTLLRMVAGLETVTAGQISIGDRVVNQLEPADRDIAMVFQNYALYPHMSVRENMAYGLKIRKISKDEIARRVEEAADILELRPYLDRKPRQLSGGQRQRVAMGRAIVRNPQVFLFDEPLSNLDAKLRVQMRLEIRKLQQRLGVTSIYVTHDQVEAMTLGDRLMVLNGGYVEQFGTPIELYDRPATTFVAGFIGSPAMNFLPATAAEGSVTLANGARIAGSGTAHGTVTLGLRPEHLLPDEGGPVRVRVELVEQLGANSLLHGQLEGTDTEMVVSMPGHMSAAADAVMAFTPTADSLHLFDPETGKRIAE.

Positions Ile-4 to Ile-234 constitute an ABC transporter domain. Gly-36–Ser-43 provides a ligand contact to ATP.

This sequence belongs to the ABC transporter superfamily. sn-glycerol-3-phosphate importer (TC 3.A.1.1.3) family. The complex is composed of two ATP-binding proteins (UgpC), two transmembrane proteins (UgpA and UgpE) and a solute-binding protein (UgpB).

The protein localises to the cell inner membrane. It catalyses the reaction sn-glycerol 3-phosphate(out) + ATP + H2O = sn-glycerol 3-phosphate(in) + ADP + phosphate + H(+). Its function is as follows. Part of the ABC transporter complex UgpBAEC involved in sn-glycerol-3-phosphate (G3P) import. Responsible for energy coupling to the transport system. In Ruegeria pomeroyi (strain ATCC 700808 / DSM 15171 / DSS-3) (Silicibacter pomeroyi), this protein is sn-glycerol-3-phosphate import ATP-binding protein UgpC.